Consider the following 82-residue polypeptide: Small ribosomal subunit protein bS18 (82 aa).

A disordered region spans residues methionine 1–proline 21.

This sequence belongs to the bacterial ribosomal protein bS18 family. Part of the 30S ribosomal subunit. Forms a tight heterodimer with protein bS6.

Its function is as follows. Binds as a heterodimer with protein bS6 to the central domain of the 16S rRNA, where it helps stabilize the platform of the 30S subunit. The polypeptide is Small ribosomal subunit protein bS18 (Corynebacterium kroppenstedtii (strain DSM 44385 / JCM 11950 / CIP 105744 / CCUG 35717)).